A 556-amino-acid chain; its full sequence is 2-succinyl-5-enolpyruvyl-6-hydroxy-3-cyclohexene-1-carboxylate synthase (556 aa).

This sequence belongs to the TPP enzyme family. MenD subfamily. As to quaternary structure, homodimer. It depends on Mg(2+) as a cofactor. The cofactor is Mn(2+). Thiamine diphosphate is required as a cofactor.

It catalyses the reaction isochorismate + 2-oxoglutarate + H(+) = 5-enolpyruvoyl-6-hydroxy-2-succinyl-cyclohex-3-ene-1-carboxylate + CO2. It participates in quinol/quinone metabolism; 1,4-dihydroxy-2-naphthoate biosynthesis; 1,4-dihydroxy-2-naphthoate from chorismate: step 2/7. The protein operates within quinol/quinone metabolism; menaquinone biosynthesis. Functionally, catalyzes the thiamine diphosphate-dependent decarboxylation of 2-oxoglutarate and the subsequent addition of the resulting succinic semialdehyde-thiamine pyrophosphate anion to isochorismate to yield 2-succinyl-5-enolpyruvyl-6-hydroxy-3-cyclohexene-1-carboxylate (SEPHCHC). The chain is 2-succinyl-5-enolpyruvyl-6-hydroxy-3-cyclohexene-1-carboxylate synthase from Shigella boydii serotype 4 (strain Sb227).